Reading from the N-terminus, the 189-residue chain is uncharacterized protein (189 aa).

It belongs to the mimivirus R457/R459 family.

It is found in the virion. This is an uncharacterized protein from Acanthamoeba polyphaga mimivirus (APMV).